The sequence spans 365 residues: tRNA N6-adenosine threonylcarbamoyltransferase (365 aa).

The Fe cation site is built by histidine 119 and histidine 123. Residues 141–145 (LVSGG), aspartate 174, glycine 187, and asparagine 288 contribute to the substrate site. Aspartate 316 is a Fe cation binding site.

This sequence belongs to the KAE1 / TsaD family. Requires Fe(2+) as cofactor.

The protein resides in the cytoplasm. It catalyses the reaction L-threonylcarbamoyladenylate + adenosine(37) in tRNA = N(6)-L-threonylcarbamoyladenosine(37) in tRNA + AMP + H(+). Functionally, required for the formation of a threonylcarbamoyl group on adenosine at position 37 (t(6)A37) in tRNAs that read codons beginning with adenine. Is involved in the transfer of the threonylcarbamoyl moiety of threonylcarbamoyl-AMP (TC-AMP) to the N6 group of A37, together with TsaE and TsaB. TsaD likely plays a direct catalytic role in this reaction. The protein is tRNA N6-adenosine threonylcarbamoyltransferase of Rhizobium johnstonii (strain DSM 114642 / LMG 32736 / 3841) (Rhizobium leguminosarum bv. viciae).